The chain runs to 328 residues: P2Y purinoceptor 3 (328 aa).

Topologically, residues 1–22 (MSMANFTAGRNSCTFQEEFKQV) are extracellular. The N-linked (GlcNAc...) asparagine glycan is linked to Asn-5. Residues 23-43 (LLPLVYSVVFLLGLPLNAVVI) form a helical membrane-spanning segment. At 44 to 57 (GQIWLARKALTRTT) the chain is on the cytoplasmic side. The chain crosses the membrane as a helical span at residues 58–78 (IYMLNLATADLLYVCSLPLLI). Residues 79–96 (YNYTQKDYWPFGDFTCKF) are Extracellular-facing. A disulfide bridge links Cys-94 with Cys-172. A helical transmembrane segment spans residues 97-117 (VRFQFYTNLHGSILFLTCISV). The Cytoplasmic segment spans residues 118-139 (QRYMGICHPLASWHKKKGKKLT). The chain crosses the membrane as a helical span at residues 140 to 160 (WLVCAAVWFIVIAQCLPTFVF). The Extracellular portion of the chain corresponds to 161 to 189 (ASTGTQRNRTVCYDLSPPDRSASYFPYGI). Residues 190–210 (TLTITGFLLPFAAILACYCSM) traverse the membrane as a helical segment. Residues 211–231 (ARILCQKDELIGLAVHKKKDK) lie on the Cytoplasmic side of the membrane. The chain crosses the membrane as a helical span at residues 232 to 252 (AVRMIIIVVIVFSISFFPFHL). Over 253–275 (TKTIYLIVRSSPTLPCPTLQAFA) the chain is Extracellular. Residues 276–298 (IAYKCTRPFASMNSVLDPILFYF) form a helical membrane-spanning segment. Residues 299–323 (TQRKFRESTRYLLDKMSSKWRHDHC) are Cytoplasmic-facing.

Belongs to the G-protein coupled receptor 1 family.

It localises to the cell membrane. Receptor for extracellular UDP &gt; ADP = UTP. The activity of this receptor is mediated by G proteins which activate a phosphatidylinositol-calcium second messenger system. In Meleagris gallopavo (Wild turkey), this protein is P2Y purinoceptor 3 (P2RY3).